The primary structure comprises 1196 residues: Major DNA-binding protein (1196 aa).

A zinc finger spans residues 499 to 512 (CNLCTFETRHACAH). Short sequence motifs (required for filament formation) lie at residues 843 to 844 (FW) and 1142 to 1144 (FNF). Residues 1171 to 1196 (RKRAFHGDDPFGEGPPEKKDLTLDML) form a required for nuclear localization region. The segment at 1176–1196 (HGDDPFGEGPPEKKDLTLDML) is disordered.

This sequence belongs to the herpesviridae major DNA-binding protein family. In terms of assembly, homooligomers. Forms double-helical filaments necessary for the formation of replication compartments within the host nucleus. Interacts with the origin-binding protein. Interacts with the helicase primase complex; this interaction stimulates primer synthesis activity of the helicase-primase complex. Interacts with the DNA polymerase. Interacts with the alkaline exonuclease; this interaction increases its nuclease processivity.

The protein localises to the host nucleus. Plays several crucial roles in viral infection. Participates in the opening of the viral DNA origin to initiate replication by interacting with the origin-binding protein. May disrupt loops, hairpins and other secondary structures present on ssDNA to reduce and eliminate pausing of viral DNA polymerase at specific sites during elongation. Promotes viral DNA recombination by performing strand-transfer, characterized by the ability to transfer a DNA strand from a linear duplex to a complementary single-stranded DNA circle. Can also catalyze the renaturation of complementary single strands. Additionally, reorganizes the host cell nucleus, leading to the formation of prereplicative sites and replication compartments. This process is driven by the protein which can form double-helical filaments in the absence of DNA. The sequence is that of Major DNA-binding protein from Human herpesvirus 2 (strain HG52) (HHV-2).